The sequence spans 294 residues: MRLAVICFCLFGIASSLPVKVTDSGSSEEKLYSLHPDPIATWLVPDPSQKQNLLAPQNAVSSEEKDDFKQETLPSNSNESHDHMDDDDDDDDDDGDHAESEDSVDSDESDESHHSDESDETVTASTQADTFTPIVPTVDVPNGRGDSLAYGLRSKSRSFQVSDEQYPDATDEDLTSHMKSGESKESLDVIPVAQLLSMPSDQDNNGKGSHESSQLDEPSLETHRLEHSKESQESADQSDVIDSQASSKASLEHQSHKFHSHKDKLVLDPKSKEDDRYLKFRISHELESSSSEVN.

An N-terminal signal peptide occupies residues 1–16 (MRLAVICFCLFGIASS). Phosphoserine is present on residues S24, S26, S27, S61, S62, S75, S77, S80, S106, S109, S112, S115, and S118. The segment at 42 to 274 (WLVPDPSQKQ…LVLDPKSKED (233 aa)) is disordered. Residues 48-61 (SQKQNLLAPQNAVS) show a composition bias toward polar residues. Acidic residues predominate over residues 85–110 (DDDDDDDDDDGDHAESEDSVDSDESD). Positions 121 to 130 (TVTASTQADT) are enriched in polar residues. O-linked (GalNAc...) threonine glycosylation is found at T123, T132, and T137. The Cell attachment site motif lies at 144–146 (RGD). T170 and T175 each carry phosphothreonine. Residues 174-187 (LTSHMKSGESKESL) show a composition bias toward basic and acidic residues. 6 positions are modified to phosphoserine: S176, S180, S200, S209, S213, and S219. A compositionally biased stretch (polar residues) spans 197–216 (SMPSDQDNNGKGSHESSQLD). A glycan (O-linked (Xyl...) (chondroitin sulfate) serine) is linked at S219. Residues 220–232 (LETHRLEHSKESQ) are compositionally biased toward basic and acidic residues. T222 bears the Phosphothreonine mark. Residues S228, S231, S234, S238, S243, S247, S250, S255, S260, S271, S283, S288, S290, and S291 each carry the phosphoserine modification. Over residues 234 to 249 (SADQSDVIDSQASSKA) the composition is skewed to polar residues. Residues 263 to 274 (DKLVLDPKSKED) show a composition bias toward basic and acidic residues. S288 carries an O-linked (Xyl...) (chondroitin sulfate) serine glycan.

Belongs to the osteopontin family. As to quaternary structure, interacts (via N-terminus) with integrin ITGA9:ITGB1. In terms of processing, extensively phosphorylated by FAM20C in the extracellular medium at multiple sites within the S-x-E/pS motif. The phosphorylated form inhibits hydroxyapatite crystallization. Dephosphorylation via a mechanism involving ALPL/TNAP promotes hydroxyapatite crystallization. O-glycosylated. Post-translationally, forms covalent cross-links mediated by transglutaminase TGM2, between a glutamine and the epsilon-amino group of a lysine residue, forming homopolymers and heteropolymers, increasing its collagen binding properties.

The protein resides in the secreted. Functionally, major non-collagenous bone protein that binds tightly to hydroxyapatite. Appears to form an integral part of the mineralized matrix. Probably important to cell-matrix interaction. Acts as a cytokine involved in enhancing production of interferon-gamma and interleukin-12 and reducing production of interleukin-10 and is essential in the pathway that leads to type I immunity. This Mus musculus (Mouse) protein is Osteopontin (Spp1).